The chain runs to 854 residues: Leucine--tRNA ligase (854 aa).

Residues 1 to 32 are disordered; the sequence is MARRDMAAETMDPRASTEPSPNEPREPARYDH. Basic and acidic residues predominate over residues 23–32; the sequence is EPREPARYDH. Positions 69-80 match the 'HIGH' region motif; the sequence is PYPSGSGLHVGH. Residues 633-637 carry the 'KMSKS' region motif; it reads KMSKS. Lys636 serves as a coordination point for ATP.

Belongs to the class-I aminoacyl-tRNA synthetase family.

It is found in the cytoplasm. It carries out the reaction tRNA(Leu) + L-leucine + ATP = L-leucyl-tRNA(Leu) + AMP + diphosphate. In Sorangium cellulosum (strain So ce56) (Polyangium cellulosum (strain So ce56)), this protein is Leucine--tRNA ligase.